The following is a 196-amino-acid chain: Probable malonic semialdehyde reductase RutE (196 aa).

Belongs to the nitroreductase family. HadB/RutE subfamily. FMN is required as a cofactor.

It carries out the reaction 3-hydroxypropanoate + NADP(+) = 3-oxopropanoate + NADPH + H(+). Functionally, may reduce toxic product malonic semialdehyde to 3-hydroxypropionic acid, which is excreted. The protein is Probable malonic semialdehyde reductase RutE of Yersinia enterocolitica serotype O:8 / biotype 1B (strain NCTC 13174 / 8081).